A 421-amino-acid polypeptide reads, in one-letter code: Histidine--tRNA ligase (421 aa).

This sequence belongs to the class-II aminoacyl-tRNA synthetase family.

It is found in the cytoplasm. It carries out the reaction tRNA(His) + L-histidine + ATP = L-histidyl-tRNA(His) + AMP + diphosphate + H(+). This chain is Histidine--tRNA ligase, found in Pyrobaculum islandicum (strain DSM 4184 / JCM 9189 / GEO3).